Consider the following 280-residue polypeptide: Serine protease 33 (280 aa).

The N-terminal stretch at 1 to 22 (MRGVSCLQVLLLLVLGAAGTQG) is a signal peptide. The region spanning 37 to 279 (IVGGRDGRDG…YSPWIQARVS (243 aa)) is the Peptidase S1 domain. Cys-62 and Cys-78 form a disulfide bridge. Catalysis depends on charge relay system residues His-77 and Asp-126. Disulfide bonds link Cys-160/Cys-237, Cys-193/Cys-216, and Cys-227/Cys-255. Residue Ser-231 is the Charge relay system of the active site.

The protein belongs to the peptidase S1 family. Predominantly expressed in macrophages. Present in the spleen, small and large intestine, lung and brain (at protein level). Highly expressed in peripheral leukocytes, ovary, retina, spleen and stomach. Moderately expressed in thymus, uterus and platelets, as well as some brain tissues, such as thalamus and fetal brain.

The protein localises to the secreted. In terms of biological role, serine protease that has amidolytic activity, cleaving its substrates before Arg residues. The protein is Serine protease 33 (PRSS33) of Homo sapiens (Human).